We begin with the raw amino-acid sequence, 205 residues long: Ribosomal RNA small subunit methyltransferase G (205 aa).

S-adenosyl-L-methionine-binding positions include G76, L81, I127–E128, and R140.

Belongs to the methyltransferase superfamily. RNA methyltransferase RsmG family.

It localises to the cytoplasm. The enzyme catalyses guanosine(527) in 16S rRNA + S-adenosyl-L-methionine = N(7)-methylguanosine(527) in 16S rRNA + S-adenosyl-L-homocysteine. Functionally, specifically methylates the N7 position of guanine in position 527 of 16S rRNA. The sequence is that of Ribosomal RNA small subunit methyltransferase G from Francisella tularensis subsp. tularensis (strain WY96-3418).